The following is a 74-amino-acid chain: Exodeoxyribonuclease 7 small subunit (74 aa).

The protein belongs to the XseB family. As to quaternary structure, heterooligomer composed of large and small subunits.

It localises to the cytoplasm. The enzyme catalyses Exonucleolytic cleavage in either 5'- to 3'- or 3'- to 5'-direction to yield nucleoside 5'-phosphates.. Bidirectionally degrades single-stranded DNA into large acid-insoluble oligonucleotides, which are then degraded further into small acid-soluble oligonucleotides. This chain is Exodeoxyribonuclease 7 small subunit, found in Clostridium beijerinckii (strain ATCC 51743 / NCIMB 8052) (Clostridium acetobutylicum).